Reading from the N-terminus, the 246-residue chain is Uridylate kinase (246 aa).

18–21 is an ATP binding site; that stretch reads KVSG. UMP is bound at residue glycine 60. Positions 61 and 65 each coordinate ATP. Residues aspartate 80 and 141–148 contribute to the UMP site; that span reads TGNPFFTT. ATP-binding residues include threonine 168, glutamine 169, tyrosine 174, and aspartate 177.

The protein belongs to the UMP kinase family. As to quaternary structure, homohexamer.

The protein localises to the cytoplasm. It carries out the reaction UMP + ATP = UDP + ADP. It functions in the pathway pyrimidine metabolism; CTP biosynthesis via de novo pathway; UDP from UMP (UMPK route): step 1/1. Its activity is regulated as follows. Inhibited by UTP. In terms of biological role, catalyzes the reversible phosphorylation of UMP to UDP. The protein is Uridylate kinase of Granulibacter bethesdensis (strain ATCC BAA-1260 / CGDNIH1).